The sequence spans 503 residues: Serine/threonine-protein kinase chk-1 (503 aa).

The 263-residue stretch at Tyr-24–Tyr-286 folds into the Protein kinase domain. ATP-binding positions include Leu-30–Val-38 and Lys-54. Asp-150 (proton acceptor) is an active-site residue. The interval Ser-320–Pro-346 is disordered. Over residues Glu-331 to Pro-346 the composition is skewed to polar residues. The residue at position 344 (Ser-344) is a Phosphoserine.

The protein belongs to the protein kinase superfamily. CAMK Ser/Thr protein kinase family. NIM1 subfamily. In terms of tissue distribution, expressed in the germline.

Its subcellular location is the cytoplasm. It localises to the nucleus. It is found in the perinuclear region. The catalysed reaction is L-seryl-[protein] + ATP = O-phospho-L-seryl-[protein] + ADP + H(+). It catalyses the reaction L-threonyl-[protein] + ATP = O-phospho-L-threonyl-[protein] + ADP + H(+). Functionally, serine/threonine-protein kinase which is required for checkpoint-mediated cell cycle arrest and activation of DNA repair in response to the presence of DNA damage or unreplicated DNA. May also negatively regulate cell cycle progression during unperturbed cell cycles. Required for checkpoint mediated cell cycle arrest in response to DNA damage in germline cells. Delays cell-cycle reentry of the Z2 and Z3 primordial germ cells in response to transcription-induced DNA damage as they emerge from cell cycle arrest in L1 larvae. Essential for embryogenesis. The protein is Serine/threonine-protein kinase chk-1 of Caenorhabditis elegans.